Consider the following 280-residue polypeptide: Probable endonuclease 4 (280 aa).

Residues His69, His109, Glu145, Asp179, His182, His216, Asp229, His231, and Glu261 each contribute to the Zn(2+) site.

Belongs to the AP endonuclease 2 family. Zn(2+) serves as cofactor.

It carries out the reaction Endonucleolytic cleavage to 5'-phosphooligonucleotide end-products.. In terms of biological role, endonuclease IV plays a role in DNA repair. It cleaves phosphodiester bonds at apurinic or apyrimidinic (AP) sites, generating a 3'-hydroxyl group and a 5'-terminal sugar phosphate. The polypeptide is Probable endonuclease 4 (Aliarcobacter butzleri (strain RM4018) (Arcobacter butzleri)).